We begin with the raw amino-acid sequence, 66 residues long: Protein translocase subunit SecE (66 aa).

Residues 29–49 (LVASTLVVVVAVFIFSLICLV) form a helical membrane-spanning segment.

It belongs to the SecE/SEC61-gamma family. In terms of assembly, component of the Sec protein translocase complex. Heterotrimer consisting of SecY, SecE and SecG subunits. The heterotrimers can form oligomers, although 1 heterotrimer is thought to be able to translocate proteins. Interacts with the ribosome. Interacts with SecDF, and other proteins may be involved. Interacts with SecA.

It localises to the cell inner membrane. Functionally, essential subunit of the Sec protein translocation channel SecYEG. Clamps together the 2 halves of SecY. May contact the channel plug during translocation. This chain is Protein translocase subunit SecE, found in Rickettsia felis (strain ATCC VR-1525 / URRWXCal2) (Rickettsia azadi).